The sequence spans 210 residues: Ovomucoid (210 aa).

A signal peptide spans 1–24 (MAMAGVFVLFSFVLCGFLPDAAFG). Kazal-like domains lie at 25–88 (AEVD…ECKE), 89–153 (TVPM…GCRK), and 156–210 (AAVS…FGKC). 3 cysteine pairs are disulfide-bonded: C29/C68, C46/C65, and C54/C86. An N-linked (GlcNAc...) asparagine glycan is attached at N34. N-linked (GlcNAc...) asparagine glycans are attached at residues N77, N93, and N99. 6 disulfide bridges follow: C94/C133, C111/C130, C119/C151, C162/C192, C170/C189, and C178/C210. A glycan (N-linked (GlcNAc...) asparagine; partial) is linked at N199.

Its subcellular location is the secreted. Its function is as follows. Serine protease inhibitor. Inhibits trypsin. The chain is Ovomucoid from Gallus gallus (Chicken).